A 91-amino-acid polypeptide reads, in one-letter code: Potassium channel toxin TtrKIK (91 aa).

An N-terminal signal peptide occupies residues 1-25 (MVATNRCCVFALLFALLLVHSLTEA). The propeptide occupies 26 to 44 (GKGKEVLGKIKDKLIEAKD). Residues 58-91 (EYACPAIEKFCEDHCAAKKAVGKCDDFKCNCIKL) form the BetaSPN-type CS-alpha/beta domain. 3 cysteine pairs are disulfide-bonded: C61-C81, C68-C86, and C72-C88.

This sequence belongs to the long chain scorpion toxin family. Class 2 subfamily. In terms of tissue distribution, expressed by the venom gland.

It localises to the secreted. The full peptide presents antibacterial and cytotoxic activities. The synthetic C-terminus (AA 33-76) inhibits voltage-gated potassium channels Kv1.1/KCNA1, Kv1.2/KCNA2, and Kv1.3/KCNA3. The polypeptide is Potassium channel toxin TtrKIK (Tityus trivittatus (Argentinean scorpion)).